A 453-amino-acid polypeptide reads, in one-letter code: Ribosomal protein uS12 methylthiotransferase RimO (453 aa).

The 116-residue stretch at 9 to 124 folds into the MTTase N-terminal domain; sequence PKVGFVSLGC…VMEAVHTHLP (116 aa). [4Fe-4S] cluster is bound by residues Cys-18, Cys-54, Cys-83, Cys-155, Cys-159, and Cys-162. In terms of domain architecture, Radical SAM core spans 141–382; the sequence is LTPKHYAYLK…MEVAERVSAR (242 aa). The region spanning 385–453 is the TRAM domain; that stretch reads QRKVGKTLRV…ADGHDLWGEV (69 aa).

The protein belongs to the methylthiotransferase family. RimO subfamily. [4Fe-4S] cluster serves as cofactor.

The protein resides in the cytoplasm. The enzyme catalyses L-aspartate(89)-[ribosomal protein uS12]-hydrogen + (sulfur carrier)-SH + AH2 + 2 S-adenosyl-L-methionine = 3-methylsulfanyl-L-aspartate(89)-[ribosomal protein uS12]-hydrogen + (sulfur carrier)-H + 5'-deoxyadenosine + L-methionine + A + S-adenosyl-L-homocysteine + 2 H(+). Functionally, catalyzes the methylthiolation of an aspartic acid residue of ribosomal protein uS12. This Ralstonia nicotianae (strain ATCC BAA-1114 / GMI1000) (Ralstonia solanacearum) protein is Ribosomal protein uS12 methylthiotransferase RimO.